A 232-amino-acid polypeptide reads, in one-letter code: Ribonuclease 3 (232 aa).

Residues 6-137 (QEMLKRDFNI…FIGALYLDQG (132 aa)) form the RNase III domain. E50 provides a ligand contact to Mg(2+). Residue D54 is part of the active site. Mg(2+) contacts are provided by D123 and E126. The active site involves E126. A DRBM domain is found at 163 to 232 (DNKTELQEVL…AYQALKKLRK (70 aa)).

Belongs to the ribonuclease III family. Homodimer. Mg(2+) is required as a cofactor.

The protein resides in the cytoplasm. The catalysed reaction is Endonucleolytic cleavage to 5'-phosphomonoester.. Its function is as follows. Digests double-stranded RNA. Involved in the processing of primary rRNA transcript to yield the immediate precursors to the large and small rRNAs (23S and 16S). Processes some mRNAs, and tRNAs when they are encoded in the rRNA operon. Processes pre-crRNA and tracrRNA of type II CRISPR loci if present in the organism. The protein is Ribonuclease 3 of Ligilactobacillus salivarius (strain UCC118) (Lactobacillus salivarius).